A 253-amino-acid polypeptide reads, in one-letter code: 2-C-methyl-D-erythritol 4-phosphate cytidylyltransferase (253 aa).

This sequence belongs to the IspD/TarI cytidylyltransferase family. IspD subfamily.

The enzyme catalyses 2-C-methyl-D-erythritol 4-phosphate + CTP + H(+) = 4-CDP-2-C-methyl-D-erythritol + diphosphate. The protein operates within isoprenoid biosynthesis; isopentenyl diphosphate biosynthesis via DXP pathway; isopentenyl diphosphate from 1-deoxy-D-xylulose 5-phosphate: step 2/6. Functionally, catalyzes the formation of 4-diphosphocytidyl-2-C-methyl-D-erythritol from CTP and 2-C-methyl-D-erythritol 4-phosphate (MEP). The sequence is that of 2-C-methyl-D-erythritol 4-phosphate cytidylyltransferase from Idiomarina loihiensis (strain ATCC BAA-735 / DSM 15497 / L2-TR).